Here is a 65-residue protein sequence, read N- to C-terminus: Large ribosomal subunit protein uL29 (65 aa).

It belongs to the universal ribosomal protein uL29 family.

In Xylella fastidiosa (strain Temecula1 / ATCC 700964), this protein is Large ribosomal subunit protein uL29.